A 236-amino-acid chain; its full sequence is Protein-L-isoaspartate O-methyltransferase 1 (236 aa).

S86 is an active-site residue.

This sequence belongs to the methyltransferase superfamily. L-isoaspartyl/D-aspartyl protein methyltransferase family.

Its subcellular location is the cytoplasm. It carries out the reaction [protein]-L-isoaspartate + S-adenosyl-L-methionine = [protein]-L-isoaspartate alpha-methyl ester + S-adenosyl-L-homocysteine. In terms of biological role, catalyzes the methyl esterification of L-isoaspartyl residues in peptides and proteins that result from spontaneous decomposition of normal L-aspartyl and L-asparaginyl residues. It plays a role in the repair and/or degradation of damaged proteins. This Nitrosospira multiformis (strain ATCC 25196 / NCIMB 11849 / C 71) protein is Protein-L-isoaspartate O-methyltransferase 1.